We begin with the raw amino-acid sequence, 213 residues long: PRA1 family protein B2 (213 aa).

Residues 1–21 (MSSSPAILPVTNQQAATQSQP) are disordered. 5 helical membrane passes run 75 to 94 (LAYF…AFSL), 98 to 117 (PFSL…LYLF), 137 to 157 (LLGL…GSLL), 161 to 181 (LTIG…DDLF), and 190 to 210 (AGLL…SVVA).

This sequence belongs to the PRA1 family. As to quaternary structure, interacts with PRA1B1, PRA1B3, PRA1B4, PRA1B5, PRA1B6 and PRA1E.

It is found in the endosome membrane. In terms of biological role, may be involved in both secretory and endocytic intracellular trafficking in the endosomal/prevacuolar compartments. The sequence is that of PRA1 family protein B2 (PRA1B2) from Arabidopsis thaliana (Mouse-ear cress).